Here is a 242-residue protein sequence, read N- to C-terminus: Ribosomal RNA small subunit methyltransferase G (242 aa).

S-adenosyl-L-methionine-binding positions include Gly82, Phe87, 133-134 (AE), and Arg152.

It belongs to the methyltransferase superfamily. RNA methyltransferase RsmG family.

It localises to the cytoplasm. Specifically methylates the N7 position of a guanine in 16S rRNA. The polypeptide is Ribosomal RNA small subunit methyltransferase G (Acetivibrio thermocellus (strain ATCC 27405 / DSM 1237 / JCM 9322 / NBRC 103400 / NCIMB 10682 / NRRL B-4536 / VPI 7372) (Clostridium thermocellum)).